The following is a 253-amino-acid chain: Tryptophan synthase alpha chain (253 aa).

Residues glutamate 44 and aspartate 55 each act as proton acceptor in the active site.

The protein belongs to the TrpA family. As to quaternary structure, tetramer of two alpha and two beta chains.

It carries out the reaction (1S,2R)-1-C-(indol-3-yl)glycerol 3-phosphate + L-serine = D-glyceraldehyde 3-phosphate + L-tryptophan + H2O. The protein operates within amino-acid biosynthesis; L-tryptophan biosynthesis; L-tryptophan from chorismate: step 5/5. The alpha subunit is responsible for the aldol cleavage of indoleglycerol phosphate to indole and glyceraldehyde 3-phosphate. The chain is Tryptophan synthase alpha chain (trpA) from Chlamydia trachomatis serovar D (strain ATCC VR-885 / DSM 19411 / UW-3/Cx).